Consider the following 714-residue polypeptide: NCK-interacting protein with SH3 domain (714 aa).

The 58-residue stretch at 1-58 (MYRALYAFRSAEPNAMAFAAGETFLVLERSSTHWWLAARARSGETGYVPPAYLHRLQG) folds into the SH3 domain. Disordered regions lie at residues 103-126 (TLSR…DHHL) and 139-298 (RTGF…AAET). Residues 106–121 (RRGTSASSATVMTPST) show a composition bias toward polar residues. Ser-120 is modified (phosphoserine). The short motif at 168–185 (RRAAPTTPPPPVKRRDRE) is the Nuclear localization signal element. Thr-174 carries the phosphothreonine modification. Over residues 200–215 (SGGSSVSSGSSASSTS) the composition is skewed to low complexity. Residues 216-226 (MDTLYTGSSPS) are compositionally biased toward polar residues. Residues 252 to 263 (QPSPSKAPSPEP) show a composition bias toward pro residues. Phosphoserine is present on residues Ser-260, Ser-286, and Ser-673.

As to quaternary structure, associates with the intermediate filaments, vimentin and desmin. Binds the first and third SH3 domains of NCK. Binds the proline-rich domains of N-WASP through its SH3 domain. Similarly, binds diaphanous protein homolog 1 (DRF1). Binds the SH3 domains of GRB2 through its proline-rich domains. Interacts with FASLG.

The protein resides in the nucleus. In terms of biological role, has an important role in stress fiber formation induced by active diaphanous protein homolog 1 (DRF1). Induces microspike formation, in vivo. In vitro, stimulates N-WASP-induced ARP2/3 complex activation in the absence of CDC42. May play an important role in the maintenance of sarcomere and/or in the assembly of myofibrils into sarcomeres. Implicated in regulation of actin polymerization and cell adhesion. The polypeptide is NCK-interacting protein with SH3 domain (Nckipsd) (Mus musculus (Mouse)).